A 104-amino-acid polypeptide reads, in one-letter code: Large ribosomal subunit protein uL24 (104 aa).

This sequence belongs to the universal ribosomal protein uL24 family. In terms of assembly, part of the 50S ribosomal subunit.

One of two assembly initiator proteins, it binds directly to the 5'-end of the 23S rRNA, where it nucleates assembly of the 50S subunit. In terms of biological role, one of the proteins that surrounds the polypeptide exit tunnel on the outside of the subunit. This chain is Large ribosomal subunit protein uL24, found in Shewanella oneidensis (strain ATCC 700550 / JCM 31522 / CIP 106686 / LMG 19005 / NCIMB 14063 / MR-1).